We begin with the raw amino-acid sequence, 231 residues long: LexA repressor (231 aa).

The H-T-H motif DNA-binding region spans 31–51; the sequence is RAEIATEFGFRSANAAEEHLQ. Catalysis depends on for autocatalytic cleavage activity residues Ser-148 and Lys-185.

The protein belongs to the peptidase S24 family. Homodimer.

The catalysed reaction is Hydrolysis of Ala-|-Gly bond in repressor LexA.. Its function is as follows. Represses a number of genes involved in the response to DNA damage (SOS response), including recA and lexA. In the presence of single-stranded DNA, RecA interacts with LexA causing an autocatalytic cleavage which disrupts the DNA-binding part of LexA, leading to derepression of the SOS regulon and eventually DNA repair. The polypeptide is LexA repressor (Leptothrix cholodnii (strain ATCC 51168 / LMG 8142 / SP-6) (Leptothrix discophora (strain SP-6))).